Reading from the N-terminus, the 325-residue chain is MSWISPELIEILLTVLKAVVILLVVVTCGAFMSFGERRLLGLFQNRYGPNRVGWGGSLQLVADMIKMFFKEDWIPKFSDRVIFTLAPMIAFTSLLLAFAIVPVSPGWVVADLNIGILFFLMMAGLAVYAVLFAGWSSNNKYSLLGAMRASAQTLSYEVFLGLSLMGVVAQAGSFNMTDIVNSQAHVWNVIPQFFGFITFAIAGVAVCHRHPFDQPEAEQELADGYHIEYSGMKFGLFFVGEYIGIVTISALMVTLFFGGWQGPLLPPFIWFALKTAFFMMMFILIRASLPRPRYDQVMSFGWKICLPLTLINLLVTAAVILWQAQ.

The next 8 membrane-spanning stretches (helical) occupy residues 11-31, 81-101, 114-134, 154-174, 186-206, 237-257, 265-285, and 304-324; these read ILLTVLKAVVILLVVVTCGAF, VIFTLAPMIAFTSLLLAFAIV, IGILFFLMMAGLAVYAVLFAG, LSYEVFLGLSLMGVVAQAGSF, VWNVIPQFFGFITFAIAGVAV, FFVGEYIGIVTISALMVTLFF, LPPFIWFALKTAFFMMMFILI, and ICLPLTLINLLVTAAVILWQA.

Belongs to the complex I subunit 1 family. NDH-1 is composed of 13 different subunits. Subunits NuoA, H, J, K, L, M, N constitute the membrane sector of the complex.

It localises to the cell inner membrane. It catalyses the reaction a quinone + NADH + 5 H(+)(in) = a quinol + NAD(+) + 4 H(+)(out). Its function is as follows. NDH-1 shuttles electrons from NADH, via FMN and iron-sulfur (Fe-S) centers, to quinones in the respiratory chain. The immediate electron acceptor for the enzyme in this species is believed to be ubiquinone. Couples the redox reaction to proton translocation (for every two electrons transferred, four hydrogen ions are translocated across the cytoplasmic membrane), and thus conserves the redox energy in a proton gradient. This subunit may bind ubiquinone. The sequence is that of NADH-quinone oxidoreductase subunit H from Escherichia coli O45:K1 (strain S88 / ExPEC).